The following is a 186-amino-acid chain: Large ribosomal subunit protein bL12c (186 aa).

Residues 1–11 (MASTLSTITLR) are compositionally biased toward polar residues. Disordered stretches follow at residues 1–23 (MAST…STHA) and 162–186 (EGVS…VSIA). The N-terminal 53 residues, 1–53 (MASTLSTITLRSPSPSTASSTHASIPFPKKALEFPIRTPKLHHRRATFLRPLA), are a transit peptide targeting the chloroplast. Residues 12–23 (SPSPSTASSTHA) are compositionally biased toward low complexity. Basic and acidic residues predominate over residues 162-180 (EGVSKDEAEDAKKQLEEAG).

The protein belongs to the bacterial ribosomal protein bL12 family.

It is found in the plastid. It localises to the chloroplast. The sequence is that of Large ribosomal subunit protein bL12c (RPL12) from Nicotiana tabacum (Common tobacco).